Consider the following 678-residue polypeptide: RNA helicase NPH-II (678 aa).

Residues 175-351 (FTSWARRVPV…EFFAESVFVH (177 aa)) form the Helicase ATP-binding domain. 188-195 (GDTGVGKT) contributes to the ATP binding site. The DEXH box motif lies at 300–303 (DEVH). The 176-residue stretch at 371–546 (PLNRFMYIEE…VFDLQLPEDL (176 aa)) folds into the Helicase C-terminal domain.

This sequence belongs to the DEAD box helicase family. DEAH subfamily. As to quaternary structure, monomer.

It localises to the virion. It catalyses the reaction ATP + H2O = ADP + phosphate + H(+). In terms of biological role, NTP-dependent helicase that catalyzes unidirectional unwinding of 3'tailed duplex RNAs and plays an important role during transcription of early mRNAs, presumably by preventing R-loop formation behind the elongating RNA polymerase. Might also play a role in the export of newly synthesized mRNA chains out of the core into the cytoplasm. Required for replication and propagation of viral particles. This is RNA helicase NPH-II (OPG084) from Oryctolagus cuniculus (Rabbit).